Here is a 432-residue protein sequence, read N- to C-terminus: 3-phosphoshikimate 1-carboxyvinyltransferase (432 aa).

3-phosphoshikimate contacts are provided by K22, S23, and R27. Residue K22 coordinates phosphoenolpyruvate. Positions 96 and 127 each coordinate phosphoenolpyruvate. Positions 173, 174, 175, 201, 316, 339, and 343 each coordinate 3-phosphoshikimate. Residue Q175 coordinates phosphoenolpyruvate. D316 (proton acceptor) is an active-site residue. Phosphoenolpyruvate is bound by residues R347, R391, and K416.

Belongs to the EPSP synthase family. As to quaternary structure, monomer.

Its subcellular location is the cytoplasm. The catalysed reaction is 3-phosphoshikimate + phosphoenolpyruvate = 5-O-(1-carboxyvinyl)-3-phosphoshikimate + phosphate. Its pathway is metabolic intermediate biosynthesis; chorismate biosynthesis; chorismate from D-erythrose 4-phosphate and phosphoenolpyruvate: step 6/7. Its function is as follows. Catalyzes the transfer of the enolpyruvyl moiety of phosphoenolpyruvate (PEP) to the 5-hydroxyl of shikimate-3-phosphate (S3P) to produce enolpyruvyl shikimate-3-phosphate and inorganic phosphate. The sequence is that of 3-phosphoshikimate 1-carboxyvinyltransferase from Haemophilus influenzae (strain ATCC 51907 / DSM 11121 / KW20 / Rd).